A 205-amino-acid chain; its full sequence is Octanoyltransferase (205 aa).

Positions 29–204 (AETPDEIWIV…HLLQQLDQKN (176 aa)) constitute a BPL/LPL catalytic domain. Residues 68 to 75 (RGGQVTYH), 135 to 137 (ALG), and 148 to 150 (GVS) contribute to the substrate site. The active-site Acyl-thioester intermediate is the Cys-166.

This sequence belongs to the LipB family.

The protein localises to the cytoplasm. It catalyses the reaction octanoyl-[ACP] + L-lysyl-[protein] = N(6)-octanoyl-L-lysyl-[protein] + holo-[ACP] + H(+). It functions in the pathway protein modification; protein lipoylation via endogenous pathway; protein N(6)-(lipoyl)lysine from octanoyl-[acyl-carrier-protein]: step 1/2. Its function is as follows. Catalyzes the transfer of endogenously produced octanoic acid from octanoyl-acyl-carrier-protein onto the lipoyl domains of lipoate-dependent enzymes. Lipoyl-ACP can also act as a substrate although octanoyl-ACP is likely to be the physiological substrate. This is Octanoyltransferase from Dechloromonas aromatica (strain RCB).